We begin with the raw amino-acid sequence, 463 residues long: Glutamate--tRNA ligase 1 (463 aa).

The short motif at 10 to 20 (PSPTGYLHIGG) is the 'HIGH' region element. A 'KMSKS' region motif is present at residues 238 to 242 (KLSKR). Lys-241 provides a ligand contact to ATP.

Belongs to the class-I aminoacyl-tRNA synthetase family. Glutamate--tRNA ligase type 1 subfamily. As to quaternary structure, monomer.

It localises to the cytoplasm. The enzyme catalyses tRNA(Glu) + L-glutamate + ATP = L-glutamyl-tRNA(Glu) + AMP + diphosphate. Its function is as follows. Catalyzes the attachment of glutamate to tRNA(Glu) in a two-step reaction: glutamate is first activated by ATP to form Glu-AMP and then transferred to the acceptor end of tRNA(Glu). This chain is Glutamate--tRNA ligase 1, found in Helicobacter pylori (strain Shi470).